Reading from the N-terminus, the 102-residue chain is Urease subunit beta (102 aa).

It belongs to the urease beta subunit family. As to quaternary structure, heterotrimer of UreA (gamma), UreB (beta) and UreC (alpha) subunits. Three heterotrimers associate to form the active enzyme.

It is found in the cytoplasm. It carries out the reaction urea + 2 H2O + H(+) = hydrogencarbonate + 2 NH4(+). The protein operates within nitrogen metabolism; urea degradation; CO(2) and NH(3) from urea (urease route): step 1/1. This chain is Urease subunit beta, found in Pseudomonas syringae pv. tomato (strain ATCC BAA-871 / DC3000).